Consider the following 326-residue polypeptide: MKSNKTIFLILLFLINFNSIYSFNFKKEIKISNDKINLPTYNPWIFQDRFNLYSILINSTNIPVFGEDNSNNCLHGLQLQFEWQNRSGRLEINQGHVNTKSWWGDMNYYLSIIPYLSAMKMGLVPVVEIVSINDQRFCSTYEDCDQEVLNNWDNFFQQIINIRNNGSEGDDQQLLKFMWTAHIGSIDKATKLFTDSLLLLPKNELRFGNGWAHFVDVIATVNFNTNYSTVYHLGQQLPPIMLNSNDTHPSSIESFTKEQRNVVLTMYEINDLSSNNLVWNSFMYLLKKMTKNEICRNLINNEINIFLNSPVPTIIEILFDILTNNC.

Residues 1–22 (MKSNKTIFLILLFLINFNSIYS) form the signal peptide. N-linked (GlcNAc...) asparagine glycans are attached at residues Asn58, Asn85, Asn165, Asn226, and Asn245.

This sequence belongs to the LEG1 family.

The protein localises to the secreted. The protein is Protein LEG1 homolog of Dictyostelium discoideum (Social amoeba).